The sequence spans 376 residues: Ribonucleoside-diphosphate reductase subunit beta (376 aa).

Residues Asp85, Glu116, and His119 each contribute to the Fe cation site. The active site involves Tyr123. Fe cation is bound by residues Glu205, Glu239, and His242.

Belongs to the ribonucleoside diphosphate reductase small chain family. As to quaternary structure, tetramer of two alpha and two beta subunits. It depends on Fe cation as a cofactor.

It carries out the reaction a 2'-deoxyribonucleoside 5'-diphosphate + [thioredoxin]-disulfide + H2O = a ribonucleoside 5'-diphosphate + [thioredoxin]-dithiol. In terms of biological role, provides the precursors necessary for DNA synthesis. Catalyzes the biosynthesis of deoxyribonucleotides from the corresponding ribonucleotides. This is Ribonucleoside-diphosphate reductase subunit beta (nrdB) from Buchnera aphidicola subsp. Baizongia pistaciae (strain Bp).